Here is a 421-residue protein sequence, read N- to C-terminus: Serine hydroxymethyltransferase (421 aa).

(6S)-5,6,7,8-tetrahydrofolate-binding positions include Leu121 and 125-127; that span reads GHL. The residue at position 230 (Lys230) is an N6-(pyridoxal phosphate)lysine. Residue 355–357 coordinates (6S)-5,6,7,8-tetrahydrofolate; sequence SPF.

This sequence belongs to the SHMT family. Homodimer. Requires pyridoxal 5'-phosphate as cofactor.

The protein localises to the cytoplasm. It carries out the reaction (6R)-5,10-methylene-5,6,7,8-tetrahydrofolate + glycine + H2O = (6S)-5,6,7,8-tetrahydrofolate + L-serine. It participates in one-carbon metabolism; tetrahydrofolate interconversion. The protein operates within amino-acid biosynthesis; glycine biosynthesis; glycine from L-serine: step 1/1. Functionally, catalyzes the reversible interconversion of serine and glycine with tetrahydrofolate (THF) serving as the one-carbon carrier. This reaction serves as the major source of one-carbon groups required for the biosynthesis of purines, thymidylate, methionine, and other important biomolecules. Also exhibits THF-independent aldolase activity toward beta-hydroxyamino acids, producing glycine and aldehydes, via a retro-aldol mechanism. The polypeptide is Serine hydroxymethyltransferase (Psychromonas ingrahamii (strain DSM 17664 / CCUG 51855 / 37)).